A 356-amino-acid polypeptide reads, in one-letter code: MRGNVLIMAGGTGGHVFPALACAREFQTRGYAVHWLGTSRGIENELVPQAGLPLHLINVSGLRGKGKLSLLKAPFQLLRSLLQARRIVRELQPVCVLGMGGYVTGPGGLAARLAGVPLVIHEQNAVAGTANRLLSRIATRICEAFPNTFGASDKRRTTGNPVREELFLETPREPLVGRKPKLLVLGGSLGAEPLNKLLPAALAELPTELRPQVFHQAGKQHAEVTAERYRDAAVEAEVAPFIKDMARAYGWADLVICRAGALTVSELAAAGLPSFLVPLPHAIDDHQSRNAEYLAKEGAAVLLPQHATDAAKLAAQLTEVLMHLEKLNVMGATARRLAKPDATRTVVDICQEVMRG.

UDP-N-acetyl-alpha-D-glucosamine contacts are provided by residues Thr12–Gly14, Asn124, Arg163, Ser188, Ile242, Ala261–Glu266, and Gln287.

This sequence belongs to the glycosyltransferase 28 family. MurG subfamily.

It localises to the cell inner membrane. The enzyme catalyses di-trans,octa-cis-undecaprenyl diphospho-N-acetyl-alpha-D-muramoyl-L-alanyl-D-glutamyl-meso-2,6-diaminopimeloyl-D-alanyl-D-alanine + UDP-N-acetyl-alpha-D-glucosamine = di-trans,octa-cis-undecaprenyl diphospho-[N-acetyl-alpha-D-glucosaminyl-(1-&gt;4)]-N-acetyl-alpha-D-muramoyl-L-alanyl-D-glutamyl-meso-2,6-diaminopimeloyl-D-alanyl-D-alanine + UDP + H(+). Its pathway is cell wall biogenesis; peptidoglycan biosynthesis. In terms of biological role, cell wall formation. Catalyzes the transfer of a GlcNAc subunit on undecaprenyl-pyrophosphoryl-MurNAc-pentapeptide (lipid intermediate I) to form undecaprenyl-pyrophosphoryl-MurNAc-(pentapeptide)GlcNAc (lipid intermediate II). The polypeptide is UDP-N-acetylglucosamine--N-acetylmuramyl-(pentapeptide) pyrophosphoryl-undecaprenol N-acetylglucosamine transferase (Ectopseudomonas mendocina (strain ymp) (Pseudomonas mendocina)).